Reading from the N-terminus, the 56-residue chain is MGEQAGGWRAARIAVSLACRECKSRNYKTTKAPDQVVSLKKFCKQCKKHTVHDETK.

The protein belongs to the bacterial ribosomal protein bL33 family.

This Sorangium cellulosum (strain So ce56) (Polyangium cellulosum (strain So ce56)) protein is Large ribosomal subunit protein bL33A.